The primary structure comprises 99 residues: Pterin-4-alpha-carbinolamine dehydratase (99 aa).

It belongs to the pterin-4-alpha-carbinolamine dehydratase family.

It catalyses the reaction (4aS,6R)-4a-hydroxy-L-erythro-5,6,7,8-tetrahydrobiopterin = (6R)-L-erythro-6,7-dihydrobiopterin + H2O. Its function is as follows. Involved in tetrahydrobiopterin biosynthesis. This is Pterin-4-alpha-carbinolamine dehydratase (pcbd) from Dictyostelium discoideum (Social amoeba).